The sequence spans 215 residues: MSKVYDWFQERLEVQALADDITSKYVPPHVNIFYCLGGVTLICFLVQFATGFAMTYYYKPTVAEAFSSVNYIMDEVSFGWLIRSIHRWSASMMVLAMILHTFRVYLTGGFKRPRELTWVTGVLLACLTVSFGVTGYSLPWDQVGYWAVKIVTQVPSAIPVVGDLIVEFLRGGAGVGQETLTRFYSAHTFVLPWLTVVFMLMHFLMIRKQGISGPL.

A helical transmembrane segment spans residues 32–52 (IFYCLGGVTLICFLVQFATGF). Residue C35 participates in heme c binding. Heme b contacts are provided by H86 and H100. 3 helical membrane-spanning segments follow: residues 90–110 (ASMM…TGGF), 116–136 (LTWV…VTGY), and 186–206 (AHTF…FLMI). Heme b-binding residues include H187 and H202.

It belongs to the cytochrome b family. PetB subfamily. The 4 large subunits of the cytochrome b6-f complex are cytochrome b6, subunit IV (17 kDa polypeptide, PetD), cytochrome f and the Rieske protein, while the 4 small subunits are PetG, PetL, PetM and PetN. The complex functions as a dimer. Requires heme b as cofactor. The cofactor is heme c.

The protein resides in the cell inner membrane. Functionally, component of the cytochrome b6-f complex, which mediates electron transfer between photosystem II (PSII) and photosystem I (PSI), cyclic electron flow around PSI, and state transitions. The chain is Cytochrome b6 from Gloeobacter violaceus (strain ATCC 29082 / PCC 7421).